Here is a 537-residue protein sequence, read N- to C-terminus: DEAD-box ATP-dependent RNA helicase 5 (537 aa).

The disordered stretch occupies residues 1–97 (MAGQKQELPV…EDLGEGESEQ (97 aa)). The stretch at 22–80 (TNKKKKKSKKNKHTEENHEVEEVPQEVTNGVEEELSNKEKKKKRKREEKESEKNKKKDV) forms a coiled coil. The span at 23 to 33 (NKKKKKSKKNK) shows a compositional bias: basic residues. A compositionally biased stretch (basic and acidic residues) spans 68 to 87 (EEKESEKNKKKDVPEKKLEA). Positions 116–142 (KTFAESNLPENVLDCCKTFEKPSPIQS) match the Q motif motif. Positions 145-324 (WPFLLDGRDL…QEFMDPNPIK (180 aa)) constitute a Helicase ATP-binding domain. ATP is bound at residue 158 to 165 (AKTGSGKT). The short motif at 272–275 (DEAD) is the DEAD box element. The region spanning 349–500 (ARDQRLIALL…VVPADLLKFG (152 aa)) is the Helicase C-terminal domain. Ser-533 carries the phosphoserine modification.

This sequence belongs to the DEAD box helicase family. DDX5/DBP2 subfamily.

The protein resides in the nucleus. The protein localises to the nucleolus. The catalysed reaction is ATP + H2O = ADP + phosphate + H(+). ATP-dependent RNA helicase required for 60S ribosomal subunit synthesis. Involved in efficient pre-rRNA processing, predominantly at site A3, which is necessary for the normal formation of 25S and 5.8S rRNAs. The sequence is that of DEAD-box ATP-dependent RNA helicase 5 (RH5) from Arabidopsis thaliana (Mouse-ear cress).